The following is a 43-amino-acid chain: Gene 67 protein (43 aa).

The polypeptide is Gene 67 protein (67) (Mycobacterium phage L5 (Mycobacteriophage L5)).